Consider the following 129-residue polypeptide: Ergosterol biosynthetic protein 28 (129 aa).

A run of 4 helical transmembrane segments spans residues 4-24 (LGYW…FGFF), 46-66 (TFGV…FNLE), 71-91 (YLAT…EYLF), and 96-116 (TIAN…WMLL).

It belongs to the ERG28 family.

It localises to the endoplasmic reticulum membrane. The sequence is that of Ergosterol biosynthetic protein 28 from Arabidopsis thaliana (Mouse-ear cress).